A 418-amino-acid polypeptide reads, in one-letter code: Trans-acting enoyl reductase (418 aa).

This sequence belongs to the saccharopine dehydrogenase family. Enoyl reductase subfamily.

Involved in the reduction of the double bond between C-4 and C-5 during phthiocerol dimycocerosates (DIM A) and glycosylated phenolphthiocerol dimycocerosates (PGL) biosynthesis. This is Trans-acting enoyl reductase from Mycobacterium ulcerans (strain Agy99).